The primary structure comprises 445 residues: DNA repair protein RadA (445 aa).

The C4-type zinc finger occupies 10-27 (CSNCANISNKWSGQCFDC). 90–97 (GEPGIGKS) contributes to the ATP binding site. Residues 249 to 253 (KNRFG) carry the RadA KNRFG motif motif. The lon-protease-like stretch occupies residues 348 to 445 (EIYLSIAGGL…HLQELKEIIK (98 aa)).

The protein belongs to the RecA family. RadA subfamily.

Its function is as follows. DNA-dependent ATPase involved in processing of recombination intermediates, plays a role in repairing DNA breaks. Stimulates the branch migration of RecA-mediated strand transfer reactions, allowing the 3' invading strand to extend heteroduplex DNA faster. Binds ssDNA in the presence of ADP but not other nucleotides, has ATPase activity that is stimulated by ssDNA and various branched DNA structures, but inhibited by SSB. Does not have RecA's homology-searching function. The polypeptide is DNA repair protein RadA (Rickettsia prowazekii (strain Madrid E)).